We begin with the raw amino-acid sequence, 214 residues long: Ras-related protein Rab2BV (214 aa).

19-26 lines the GTP pocket; it reads GDSGVGKS. Residues 41 to 49 carry the Effector region motif; sequence SKSTIGVEF. Residues 67 to 71 and 125 to 128 contribute to the GTP site; these read DTAGQ and NKSD. S-geranylgeranyl cysteine attachment occurs at residues cysteine 211 and cysteine 212.

Belongs to the small GTPase superfamily. Rab family.

It is found in the cell membrane. The chain is Ras-related protein Rab2BV (RAB2BV) from Beta vulgaris (Sugar beet).